The primary structure comprises 181 residues: Large ribosomal subunit protein uL10 (181 aa).

It belongs to the universal ribosomal protein uL10 family. In terms of assembly, part of the ribosomal stalk of the 50S ribosomal subunit. The N-terminus interacts with L11 and the large rRNA to form the base of the stalk. The C-terminus forms an elongated spine to which L12 dimers bind in a sequential fashion forming a multimeric L10(L12)X complex.

In terms of biological role, forms part of the ribosomal stalk, playing a central role in the interaction of the ribosome with GTP-bound translation factors. This Bradyrhizobium diazoefficiens (strain JCM 10833 / BCRC 13528 / IAM 13628 / NBRC 14792 / USDA 110) protein is Large ribosomal subunit protein uL10.